The following is a 520-amino-acid chain: Retinoic acid receptor RXR-beta (520 aa).

Residues 1-167 form a disordered region; that stretch reads MSWATRPPFL…GGSGPPEDVK (167 aa). Residues 1 to 191 form a modulating region; it reads MSWATRPPFL…PGGPGAGKRL (191 aa). Arg-25 carries the post-translational modification Omega-N-methylarginine. Positions 64 to 79 are enriched in basic and acidic residues; that stretch reads EAGRDGMGDSGRDSRS. A compositionally biased stretch (pro residues) spans 95-118; it reads SSPPGPPLTPSAPPPPMPPPPLGS. A compositionally biased stretch (low complexity) spans 119-130; the sequence is PFPVISSSMGSP. Residues 131-140 show a composition bias toward pro residues; the sequence is GLPPPAPPGF. NR C4-type zinc fingers lie at residues 192–212 and 228–252; these read CAIC…CEGC and CRDN…YQKC. The nuclear receptor DNA-binding region spans 192–257; sequence CAICGDRSSG…RYQKCLATGM (66 aa). The tract at residues 258-382 is hinge; the sequence is KREAVQEERQ…HRSIDVRDGI (125 aa). The span at 263-275 shows a compositional bias: basic and acidic residues; that stretch reads QEERQRGKDKDGD. Disordered stretches follow at residues 263–285 and 300–323; these read QEER…APEE and QKSD…NDPV. In terms of domain architecture, NR LBD spans 283 to 516; sequence PEEMPVDRIL…TFLMEMLEAP (234 aa). Over residues 307–317 the composition is skewed to gly residues; that stretch reads EGPGATGGGGS.

Belongs to the nuclear hormone receptor family. NR2 subfamily. In terms of assembly, homodimer (in vitro). Heterodimer with other retinoic acid receptor family members. Binds DNA preferentially as a RAR/RXR heterodimer. Interacts with NR1H3. Interacts with AKAP13. In all tissues tested, including brain, thymus, spleen and liver.

It localises to the nucleus. The protein resides in the cytoplasm. Receptor for retinoic acid. Retinoic acid receptors bind as heterodimers to their target response elements in response to their ligands, all-trans or 9-cis retinoic acid, and regulate gene expression in various biological processes. The RAR/RXR heterodimers bind to the retinoic acid response elements (RARE). This chain is Retinoic acid receptor RXR-beta (Rxrb), found in Mus musculus (Mouse).